An 85-amino-acid chain; its full sequence is Arminin 2b (85 aa).

A signal peptide spans 1–18 (MKTVFAILFLAFIALTYA). The propeptide occupies 19-57 (RSYEDVKEEIKNEIEKEILEDLEEESDELNDKSKEINDA). Alanine amide is present on A82.

It belongs to the arminin family. Expressed in entodermal epithelium along the body column.

The protein localises to the secreted. It is found in the target cell membrane. Functionally, antimicrobial peptide with a broad-spectrum antimicrobial activity. Keeps its antibacterial activity under a wide range of salt concentrations that mimic physiological conditions of human blood, which is surprising, since Hydra is an obligate freshwater animal with nearly no salt tolerance. Does not affect red blood cells. The sequence is that of Arminin 2b from Hydra vulgaris (Hydra).